A 156-amino-acid polypeptide reads, in one-letter code: Small ribosomal subunit protein uS7 (156 aa).

The protein belongs to the universal ribosomal protein uS7 family. Part of the 30S ribosomal subunit. Contacts proteins S9 and S11.

In terms of biological role, one of the primary rRNA binding proteins, it binds directly to 16S rRNA where it nucleates assembly of the head domain of the 30S subunit. Is located at the subunit interface close to the decoding center, probably blocks exit of the E-site tRNA. This chain is Small ribosomal subunit protein uS7, found in Frankia alni (strain DSM 45986 / CECT 9034 / ACN14a).